Here is a 229-residue protein sequence, read N- to C-terminus: Urease accessory protein UreF (229 aa).

It belongs to the UreF family. In terms of assembly, ureD, UreF and UreG form a complex that acts as a GTP-hydrolysis-dependent molecular chaperone, activating the urease apoprotein by helping to assemble the nickel containing metallocenter of UreC. The UreE protein probably delivers the nickel.

The protein localises to the cytoplasm. Functionally, required for maturation of urease via the functional incorporation of the urease nickel metallocenter. This chain is Urease accessory protein UreF, found in Staphylococcus aureus (strain MRSA252).